The following is a 29-amino-acid chain: Galanin (29 aa).

Residue Ala29 is modified to Alanine amide.

The protein belongs to the galanin family.

Its subcellular location is the secreted. Functionally, contracts smooth muscle of the gastrointestinal and genitourinary tract, regulates growth hormone release, modulates insulin release, and may be involved in the control of adrenal secretion. The protein is Galanin (GAL) of Alligator mississippiensis (American alligator).